The chain runs to 415 residues: Tyrosine--tRNA ligase (415 aa).

Tyr-34 serves as a coordination point for L-tyrosine. Residues 39–48 (PSADSLHLGN) carry the 'HIGH' region motif. L-tyrosine-binding residues include Tyr-162 and Gln-166. Residues 224–228 (KFGKS) carry the 'KMSKS' region motif. Lys-227 is an ATP binding site. Residues 346-413 (IKIIDLLNLA…KRNYFLIVWN (68 aa)) form the S4 RNA-binding domain.

Belongs to the class-I aminoacyl-tRNA synthetase family. TyrS type 1 subfamily. As to quaternary structure, homodimer.

The protein localises to the cytoplasm. The catalysed reaction is tRNA(Tyr) + L-tyrosine + ATP = L-tyrosyl-tRNA(Tyr) + AMP + diphosphate + H(+). Catalyzes the attachment of tyrosine to tRNA(Tyr) in a two-step reaction: tyrosine is first activated by ATP to form Tyr-AMP and then transferred to the acceptor end of tRNA(Tyr). The chain is Tyrosine--tRNA ligase from Ureaplasma urealyticum serovar 10 (strain ATCC 33699 / Western).